A 396-amino-acid polypeptide reads, in one-letter code: E3 ubiquitin-protein ligase NHLRC1 (396 aa).

The RING-type zinc finger occupies 23–69; the sequence is CKVCFERFGHRQQRRPRNLPCGHVVCLACVAALAHPRTLALECPFCR. 6 NHL repeats span residues 110 to 154, 158 to 201, 202 to 242, 245 to 298, 299 to 347, and 348 to 391; these read ALTC…FDSG, AHQF…FDFF, GQIK…LEAD, EGVL…FNSS, MQLI…LGKP, and EEFP…FKVM.

In terms of assembly, interacts with AGL. Interacts (via the NHL repeats) with EPM2A/laforin. Forms a complex with EPM2A/laforin and HSP70.

It localises to the endoplasmic reticulum. The protein resides in the nucleus. It catalyses the reaction S-ubiquitinyl-[E2 ubiquitin-conjugating enzyme]-L-cysteine + [acceptor protein]-L-lysine = [E2 ubiquitin-conjugating enzyme]-L-cysteine + N(6)-ubiquitinyl-[acceptor protein]-L-lysine.. The protein operates within protein modification; protein ubiquitination. Functionally, E3 ubiquitin-protein ligase. Together with the phosphatase EPM2A/laforin, appears to be involved in the clearance of toxic polyglucosan and protein aggregates via multiple pathways. In complex with EPM2A/laforin and HSP70, suppresses the cellular toxicity of misfolded proteins by promoting their degradation through the ubiquitin-proteasome system (UPS). Ubiquitinates the glycogen-targeting protein phosphatase subunits PPP1R3C/PTG and PPP1R3D in a laforin-dependent manner and targets them for proteasome-dependent degradation, thus decreasing glycogen accumulation. Polyubiquitinates EPM2A/laforin and ubiquitinates AGL and targets them for proteasome-dependent degradation. Also promotes proteasome-independent protein degradation through the macroautophagy pathway. This chain is E3 ubiquitin-protein ligase NHLRC1 (Nhlrc1), found in Rattus norvegicus (Rat).